Here is a 128-residue protein sequence, read N- to C-terminus: Large ribosomal subunit protein bL12 (128 aa).

This sequence belongs to the bacterial ribosomal protein bL12 family. As to quaternary structure, homodimer. Part of the ribosomal stalk of the 50S ribosomal subunit. Forms a multimeric L10(L12)X complex, where L10 forms an elongated spine to which 2 to 4 L12 dimers bind in a sequential fashion. Binds GTP-bound translation factors.

Functionally, forms part of the ribosomal stalk which helps the ribosome interact with GTP-bound translation factors. Is thus essential for accurate translation. This is Large ribosomal subunit protein bL12 from Thermotoga petrophila (strain ATCC BAA-488 / DSM 13995 / JCM 10881 / RKU-1).